We begin with the raw amino-acid sequence, 825 residues long: Fibrous sheath CABYR-binding protein (825 aa).

2 disordered regions span residues 1-43 (MVGK…SYSA) and 113-139 (QDVE…RTGY). Positions 21–40 (KSSSPKATHRIGNTSGSKGS) are enriched in polar residues. Serine 160 is subject to Phosphoserine. 3 disordered regions span residues 168–232 (SRPD…LLED), 244–718 (QEGS…DKHS), and 732–751 (GEAS…EDEA). The segment covering 200–220 (PATNSNEEIGQKNISRTSFTQ) has biased composition (polar residues). Residues 277–290 (ATAKAEPRPAEETH) are compositionally biased toward basic and acidic residues. 2 stretches are compositionally biased toward low complexity: residues 348–357 (AEILPPSAEE) and 398–407 (PLPAEGALEE). Over residues 610–676 (VQPPPAEEAP…PAEVQPPPAE (67 aa)) the composition is skewed to pro residues.

In terms of assembly, interacts with CABYR. Interacts with ROPN1 and ROPN1L; the interaction increases upon spermatozoa capacitation conditions. In terms of processing, phosphorylated by PKA upon spermatozoa capacitation conditions.

The protein localises to the cell projection. It localises to the cilium. Its subcellular location is the flagellum. In terms of biological role, may be involved in the later stages of fibrous sheath biogenesis and spermatozoa capacitation. Inhibits ROPN1 and ROPN1L SUMOylation. Binds calcium. This chain is Fibrous sheath CABYR-binding protein (FSCB), found in Homo sapiens (Human).